Reading from the N-terminus, the 314-residue chain is 2,3-dihydroxyphenylpropionate/2,3-dihydroxicinnamic acid 1,2-dioxygenase (314 aa).

His115 functions as the Proton donor in the catalytic mechanism. His179 functions as the Proton acceptor in the catalytic mechanism.

Belongs to the LigB/MhpB extradiol dioxygenase family. As to quaternary structure, homotetramer. The cofactor is Fe(2+).

It carries out the reaction 3-(2,3-dihydroxyphenyl)propanoate + O2 = (2Z,4E)-2-hydroxy-6-oxonona-2,4-dienedioate + H(+). The enzyme catalyses (2E)-3-(2,3-dihydroxyphenyl)prop-2-enoate + O2 = (2Z,4E,7E)-2-hydroxy-6-oxonona-2,4,7-trienedioate + H(+). The protein operates within aromatic compound metabolism; 3-phenylpropanoate degradation. Its function is as follows. Catalyzes the non-heme iron(II)-dependent oxidative cleavage of 2,3-dihydroxyphenylpropionic acid and 2,3-dihydroxicinnamic acid into 2-hydroxy-6-ketononadienedioate and 2-hydroxy-6-ketononatrienedioate, respectively. The protein is 2,3-dihydroxyphenylpropionate/2,3-dihydroxicinnamic acid 1,2-dioxygenase of Klebsiella pneumoniae subsp. pneumoniae (strain ATCC 700721 / MGH 78578).